We begin with the raw amino-acid sequence, 136 residues long: Small ribosomal subunit protein uS8c (136 aa).

This sequence belongs to the universal ribosomal protein uS8 family. Part of the 30S ribosomal subunit.

The protein localises to the plastid. The protein resides in the chloroplast. One of the primary rRNA binding proteins, it binds directly to 16S rRNA central domain where it helps coordinate assembly of the platform of the 30S subunit. This Citrus sinensis (Sweet orange) protein is Small ribosomal subunit protein uS8c (rps8).